The following is a 711-amino-acid chain: Hepatocyte growth factor-like protein (711 aa).

The N-terminal stretch at 1–18 (MGWLPLLLLLTQCLGVPG) is a signal peptide. The PAN domain occupies 21 to 105 (SPLNDFQVLR…GRCDLFQKKD (85 aa)). 20 disulfide bridges follow: Cys56-Cys78, Cys60-Cys66, Cys110-Cys186, Cys131-Cys169, Cys157-Cys181, Cys191-Cys268, Cys194-Cys324, Cys212-Cys251, Cys240-Cys263, Cys283-Cys361, Cys304-Cys343, Cys332-Cys355, Cys370-Cys448, Cys391-Cys431, Cys419-Cys443, Cys468-Cys588, Cys507-Cys523, Cys602-Cys667, Cys632-Cys646, and Cys657-Cys685. An N-linked (GlcNAc...) asparagine glycan is attached at Asn72. Kringle domains lie at 110-186 (CIMN…IKSC), 191-268 (CVWC…LPRC), 283-361 (CFRG…IRRC), and 370-448 (CYHG…LRRC). A glycan (N-linked (GlcNAc...) asparagine) is linked at Asn296. Residues 484–709 (VVGGHPGNSP…FVDWIHKVMR (226 aa)) form the Peptidase S1 domain. N-linked (GlcNAc...) asparagine glycosylation is present at Asn615.

This sequence belongs to the peptidase S1 family. Plasminogen subfamily. As to quaternary structure, dimer of an alpha chain and a beta chain linked by a disulfide bond. Interacts (via beta chain) with MST1R (via SEMA domain). In terms of processing, cleaved after Arg-483, probably by HPN/Hepsin, to yield the active form consisting of two disulfide-linked chains.

It is found in the secreted. This Homo sapiens (Human) protein is Hepatocyte growth factor-like protein (MST1).